The following is a 234-amino-acid chain: Alpha N-terminal protein methyltransferase 1 (234 aa).

S-adenosyl-L-methionine contacts are provided by residues Gly71, Arg76, 93-95 (DVV), 120-121 (LQ), and Gln136.

This sequence belongs to the methyltransferase superfamily. NTM1 family. As to expression, expressed in uterine cells and PVT neurons of the tail. Expressed in pharynx, intestine and DVB tail neuron.

It carries out the reaction N-terminal L-alanyl-L-prolyl-L-lysyl-[protein] + 3 S-adenosyl-L-methionine = N-terminal N,N,N-trimethyl-L-alanyl-L-prolyl-L-lysyl-[protein] + 3 S-adenosyl-L-homocysteine + 3 H(+). It catalyses the reaction N-terminal L-seryl-L-prolyl-L-lysyl-[protein] + 3 S-adenosyl-L-methionine = N-terminal N,N,N-trimethyl-L-seryl-L-prolyl-L-lysyl-[protein] + 3 S-adenosyl-L-homocysteine + 3 H(+). The catalysed reaction is N-terminal L-prolyl-L-prolyl-L-lysyl-[protein] + 2 S-adenosyl-L-methionine = N-terminal N,N-dimethyl-L-prolyl-L-prolyl-L-lysyl-[protein] + 2 S-adenosyl-L-homocysteine + 2 H(+). In terms of biological role, alpha-N-methyltransferase that methylates the N-terminus of target proteins containing the N-terminal motif [Ala/Pro/Ser]-Pro-Lys when the initiator Met is cleaved. Specifically catalyzes mono-, di- or tri-methylation of exposed alpha-amino group of Ala or Ser residue in the [Ala/Ser]-Pro-Lys motif and mono- or di-methylation of Pro in the Pro-Pro-Lys motif. Probably required for the synthesis of neurotransmitter melatonin from serotonin, which plays a role in promoting a sleep-like state, called lethargus, during larval development. The polypeptide is Alpha N-terminal protein methyltransferase 1 (Caenorhabditis elegans).